Consider the following 306-residue polypeptide: Probable cobalamin biosynthesis protein CobD (306 aa).

The next 5 membrane-spanning stretches (helical) occupy residues 54-74 (LFGFLNVILVLAIVFFMTYEI), 88-108 (ISIYSIILSFSIGHKSLIEFS), 155-175 (ITDSIIAPLIYAAIFGLPGAF), 215-235 (IAGMLLIISAPFYGGNIKSAI), and 286-306 (SLKAVDYSVLLFLIIYTVLLM).

The protein belongs to the CobD/CbiB family.

It localises to the cell membrane. It participates in cofactor biosynthesis; adenosylcobalamin biosynthesis. Converts cobyric acid to cobinamide by the addition of aminopropanol on the F carboxylic group. This chain is Probable cobalamin biosynthesis protein CobD, found in Methanococcus maripaludis (strain C7 / ATCC BAA-1331).